The primary structure comprises 517 residues: Methylmalonyl-CoA decarboxylase subunit alpha (517 aa).

The region spanning 4-260 (AAKKIQDLQK…NNMEKAPEFG (257 aa)) is the CoA carboxyltransferase N-terminal domain. Residues 271–513 (ELDALMPDNP…REKLPAKKHG (243 aa)) enclose the CoA carboxyltransferase C-terminal domain.

Belongs to the AccD/PCCB family. In terms of assembly, the methylmalonyl-CoA decarboxylase is composed of four subunits: the carboxyltransferase alpha subunit (MmdA), the tunnel beta subunit (MmdB), the biotin-containing gamma subunit (MmdC) and the delta subunit (MmdD).

It is found in the cell membrane. The enzyme catalyses (S)-methylmalonyl-CoA + Na(+)(in) + H(+)(out) = propanoyl-CoA + Na(+)(out) + CO2. Its function is as follows. Carboxyltransferase subunit of the sodium ion pump methylmalonyl-CoA decarboxylase, which converts the chemical energy of a decarboxylation reaction into an electrochemical gradient of Na(+) ions across the cytoplasmic membrane, thereby creating a sodium ion motive force that is used for ATP synthesis. The alpha subunit catalyzes the Na(+)-independent carboxyltransfer from methylmalonyl-CoA to the prosthetic biotin group located on the gamma subunit. The sequence is that of Methylmalonyl-CoA decarboxylase subunit alpha from Propionigenium modestum.